The following is a 326-amino-acid chain: Phospho-N-acetylmuramoyl-pentapeptide-transferase (326 aa).

The next 10 helical transmembrane spans lie at 13 to 33, 57 to 77, 85 to 105, 121 to 141, 155 to 175, 181 to 201, 208 to 228, 232 to 252, 257 to 277, and 305 to 325; these read ILAP…IFIP, GTPT…ILIM, EMIL…DDIL, MILL…NVGT, NLGI…TNAV, IDGL…IIGF, VAVF…FNAF, IFMG…IALM, LFVI…IIQV, and VKIV…GFVA.

This sequence belongs to the glycosyltransferase 4 family. MraY subfamily. Mg(2+) serves as cofactor.

Its subcellular location is the cell membrane. The catalysed reaction is UDP-N-acetyl-alpha-D-muramoyl-L-alanyl-gamma-D-glutamyl-meso-2,6-diaminopimeloyl-D-alanyl-D-alanine + di-trans,octa-cis-undecaprenyl phosphate = di-trans,octa-cis-undecaprenyl diphospho-N-acetyl-alpha-D-muramoyl-L-alanyl-D-glutamyl-meso-2,6-diaminopimeloyl-D-alanyl-D-alanine + UMP. It functions in the pathway cell wall biogenesis; peptidoglycan biosynthesis. Its function is as follows. Catalyzes the initial step of the lipid cycle reactions in the biosynthesis of the cell wall peptidoglycan: transfers peptidoglycan precursor phospho-MurNAc-pentapeptide from UDP-MurNAc-pentapeptide onto the lipid carrier undecaprenyl phosphate, yielding undecaprenyl-pyrophosphoryl-MurNAc-pentapeptide, known as lipid I. This chain is Phospho-N-acetylmuramoyl-pentapeptide-transferase, found in Clostridium beijerinckii (strain ATCC 51743 / NCIMB 8052) (Clostridium acetobutylicum).